Here is a 326-residue protein sequence, read N- to C-terminus: MRLWPQAWGAVRGAWRECFPLQGHDVARWFPGHMAKGLKKMQSSLKSVDCVIEVHDARIPFSGRNPLFQELLGLKPHLLVLNKMDLADLTEQQKIVQRLEEKGLSNVLFTNCVKDENIKQIVPKVMELIRCSYRYHRAETPEYCIMVVGVPNVGKSSLINSLRRQHLRTGKAARVGGEPGITRAVTSRIQVCERPLVFLLDTPGVLAPRIESVETGLKLALCGTVLDHLVGEETMADYLLYTLNRHGLFGYVQHYALASACDQIEWVLKNVAIKLRKTRKVKVLTGTGNVNVIQPDYAMAARDFLRTFRSGLLGQVMLDRDIIPAC.

The 174-residue stretch at 35-208 folds into the CP-type G domain; it reads AKGLKKMQSS…LLDTPGVLAP (174 aa). Residues 82–85, 152–157, and glycine 204 each bind GTP; these read NKMD and NVGKSS.

This sequence belongs to the TRAFAC class YlqF/YawG GTPase family. MTG1 subfamily. Associates with the mitochondrial ribosome large subunit; the association occurs in a GTP-dependent manner.

The protein localises to the mitochondrion inner membrane. Its function is as follows. Plays a role in the regulation of the mitochondrial ribosome assembly and of translational activity. Displays mitochondrial GTPase activity. In Mus musculus (Mouse), this protein is Mitochondrial ribosome-associated GTPase 1 (Mtg1).